We begin with the raw amino-acid sequence, 80 residues long: Cell division activator CedA (80 aa).

It belongs to the CedA family.

Activates the cell division inhibited by chromosomal DNA over-replication. This Escherichia coli (strain SMS-3-5 / SECEC) protein is Cell division activator CedA.